Here is a 251-residue protein sequence, read N- to C-terminus: ATP synthase subunit a (251 aa).

The next 6 membrane-spanning stretches (helical) occupy residues 30 to 50 (NSNEMMLLAAVIVTSLFVVAL), 86 to 106 (FFPFVFTLFAFILIGNILGLF), 116 to 136 (IAITGALALFVFALSTLVGFW), 145 to 165 (FFSPPGVPGWLLPLLIPIEIV), 195 to 215 (FMLMLVSGLGAVGVVAAIIPL), and 219 to 239 (IALTALEFLVAFLQAYVFAIL).

Belongs to the ATPase A chain family. As to quaternary structure, F-type ATPases have 2 components, CF(1) - the catalytic core - and CF(0) - the membrane proton channel. CF(1) has five subunits: alpha(3), beta(3), gamma(1), delta(1), epsilon(1). CF(0) has three main subunits: a(1), b(2) and c(9-12). The alpha and beta chains form an alternating ring which encloses part of the gamma chain. CF(1) is attached to CF(0) by a central stalk formed by the gamma and epsilon chains, while a peripheral stalk is formed by the delta and b chains.

It localises to the cell inner membrane. In terms of biological role, key component of the proton channel; it plays a direct role in the translocation of protons across the membrane. In Acidiphilium cryptum (strain JF-5), this protein is ATP synthase subunit a.